Consider the following 929-residue polypeptide: MAEPEKKRDQPFSQEKDEEKDLYLVHDEHESPLPLTVTSRVLYMLGDIASGPAYRFTQWLDLVRKRSATYGSSGFPHRLHRIDDMVTSAGERNTDPKSPPSRQSSEISLWERLGKASTVDIDSSCFSWNMLSSLHHTEHSSSTDHSEEDQSKPLEVTVNSGGVVFFALFNSSSSEDASRKEEAAVIKFASSRMATQSERLGYEFSKWLGVQIPQARVIHSCNPEWTLIKEATEKAQAKATSEGDEVGEMTCSELLEALELSRCLLLMSYVHGCPMLESMSSFETEEKAERAAAALGRILVLDLVIRNEDRLPCRQLRWRGNPANLLLTDRIVSSAKHHECSFDEAFDSAIKRYHPKDYRSIQRERRASSVDSRSRLSISDQMLVSQASDFSDITESPRSYDTGLMSPMSDRSVAADFHLVAIDSGVPRRPPAGKRASDQEIYPRLVELLLNSSQYSSNLLHEITEGSLGYPQAEDGEETSNVRSVVTPVVREFRNGFRAGLRDLQEFHIFLVTLHQKLDVLLRAFFSMMDKTMCADFDREDFAVPESPSHTHGHEVNHYPSPSKDRVPSDNSSDHSESDMQKSVPRTPNSENKEDGSSPKSRESWHGRSGKGGESLSSQRLAAKLRDFHKFAKVDAESNKELDQWNETLRNEVMKLCQENGFNTGFFEGSDNNSCTDAYELKVRLEHILERISLISKAANTEKPSMIQENLFIGGGLAARSIYTLQHLGITHVLCLCANEIGQSDTQYPDLFEYQNFSITDDEDSNIESIFQEALDFIKHGEETGGKILVHCFEGRSRSATVVLAYLMLQKKLTLLEAWSKLRKVHRRAQPNDGFARILINLDKKCHGKVSMEWRQRKPTMKVCPVCGKNAGLSSSSLKLHLQKSHRKLSSGSVDSAMNMEIQKALEALKLSTGRGSSASSNSFQSHPG.

2 disordered regions span residues 1–27 and 545–618; these read MAEP…LVHD and PESP…SLSS. Composition is skewed to basic and acidic residues over residues 552–580 and 591–606; these read HGHE…ESDM and ENKE…ESWH. The 146-residue stretch at 703–848 folds into the Tyrosine-protein phosphatase domain; sequence KPSMIQENLF…LINLDKKCHG (146 aa). Cysteine 792 (phosphocysteine intermediate) is an active-site residue. 792–798 is a substrate binding site; it reads CFEGRSR. Positions 903–911 match the Nuclear export signal motif; sequence QKALEALKL.

As to quaternary structure, interacts with MPK18. In terms of tissue distribution, expressed in roots, leaves and flowers.

The protein resides in the cytoplasm. The catalysed reaction is O-phospho-L-seryl-[protein] + H2O = L-seryl-[protein] + phosphate. It carries out the reaction O-phospho-L-threonyl-[protein] + H2O = L-threonyl-[protein] + phosphate. It catalyses the reaction O-phospho-L-tyrosyl-[protein] + H2O = L-tyrosyl-[protein] + phosphate. Probable dual specificity phosphatase that binds and dephosphorylates MPK18, modulating the organization and dynamics of cortical microtubules. Acts as a negative regulator of abscisic acid (ABA) signaling during seed germination and light-induced stomata aperture. The chain is Dual specificity protein phosphatase PHS1 (PHS1) from Arabidopsis thaliana (Mouse-ear cress).